Here is a 173-residue protein sequence, read N- to C-terminus: Probable chemoreceptor glutamine deamidase CheD (173 aa).

This sequence belongs to the CheD family.

The catalysed reaction is L-glutaminyl-[protein] + H2O = L-glutamyl-[protein] + NH4(+). Probably deamidates glutamine residues to glutamate on methyl-accepting chemotaxis receptors (MCPs), playing an important role in chemotaxis. The polypeptide is Probable chemoreceptor glutamine deamidase CheD (Haloarcula marismortui (strain ATCC 43049 / DSM 3752 / JCM 8966 / VKM B-1809) (Halobacterium marismortui)).